A 578-amino-acid polypeptide reads, in one-letter code: A-type ATP synthase subunit A (578 aa).

Residue G228–T235 participates in ATP binding.

This sequence belongs to the ATPase alpha/beta chains family. Has multiple subunits with at least A(3), B(3), C, D, E, F, G, I and proteolipid K(x).

The protein localises to the cell membrane. The catalysed reaction is ATP + H2O + 4 H(+)(in) = ADP + phosphate + 5 H(+)(out). Its activity is regulated as follows. ATP hydrolysis stimulated by sulfite, ethanol, glycerol, magnesium and zinc ions, inhibited by diethylstilbestrol (DES) and less well by N,N-dicyclohexylcarbodiimide (DCCD). Its function is as follows. Component of the A-type ATP synthase that produces ATP from ADP in the presence of a proton gradient across the membrane. The A chain is the catalytic subunit. This is A-type ATP synthase subunit A from Methanosarcina mazei (strain ATCC BAA-159 / DSM 3647 / Goe1 / Go1 / JCM 11833 / OCM 88) (Methanosarcina frisia).